The primary structure comprises 458 residues: Monomethylamine methyltransferase MtmB1 (458 aa).

Position 202 (Pyl202) is a non-standard amino acid, pyrrolysine.

Belongs to the monomethylamine methyltransferase family. As to quaternary structure, can form a complex with MtmC.

It catalyses the reaction Co(I)-[methylamine-specific corrinoid protein] + methylamine + H(+) = methyl-Co(III)-[methylamine-specific corrinoid protein] + NH4(+). The protein operates within one-carbon metabolism; methanogenesis from methylamine. Its function is as follows. Catalyzes the transfer of the methyl group from monomethylamine to the corrinoid cofactor of MtmC. The sequence is that of Monomethylamine methyltransferase MtmB1 (mtmB1) from Methanosarcina acetivorans (strain ATCC 35395 / DSM 2834 / JCM 12185 / C2A).